The chain runs to 75 residues: MRNKIPYDSKKILYDSELLLNSASNRYILTMKVANRANLRRYEEFETMNHSSIKPIARTIIEMVDDKNFLVVKKK.

Belongs to the RNA polymerase subunit omega family.

The protein resides in the plastid. It is found in the chloroplast. The catalysed reaction is RNA(n) + a ribonucleoside 5'-triphosphate = RNA(n+1) + diphosphate. In terms of biological role, may be involved in RNA polymerase activity. The sequence is that of Putative DNA-directed RNA polymerase subunit omega (rpoZ) from Mesostigma viride (Green alga).